The chain runs to 226 residues: Triosephosphate isomerase (226 aa).

12 to 14 (NFK) provides a ligand contact to substrate. His96 functions as the Electrophile in the catalytic mechanism. Residue Glu144 is the Proton acceptor of the active site. Residues Ile149, Gly184, and 205 to 206 (AS) each bind substrate.

This sequence belongs to the triosephosphate isomerase family. Homotetramer; dimer of dimers.

It is found in the cytoplasm. It catalyses the reaction D-glyceraldehyde 3-phosphate = dihydroxyacetone phosphate. The protein operates within carbohydrate biosynthesis; gluconeogenesis. Its pathway is carbohydrate degradation; glycolysis; D-glyceraldehyde 3-phosphate from glycerone phosphate: step 1/1. In terms of biological role, involved in the gluconeogenesis. Catalyzes stereospecifically the conversion of dihydroxyacetone phosphate (DHAP) to D-glyceraldehyde-3-phosphate (G3P). This Thermococcus kodakarensis (strain ATCC BAA-918 / JCM 12380 / KOD1) (Pyrococcus kodakaraensis (strain KOD1)) protein is Triosephosphate isomerase.